The chain runs to 202 residues: Large ribosomal subunit protein bL9 (202 aa).

The disordered stretch occupies residues 168-202; that stretch reads DEAGFTEDYDPNAEPGEIPTELQDEAPAAEATDEA. The segment covering 192–202 has biased composition (low complexity); it reads EAPAAEATDEA.

This sequence belongs to the bacterial ribosomal protein bL9 family.

Functionally, binds to the 23S rRNA. This chain is Large ribosomal subunit protein bL9, found in Rhizorhabdus wittichii (strain DSM 6014 / CCUG 31198 / JCM 15750 / NBRC 105917 / EY 4224 / RW1) (Sphingomonas wittichii).